An 827-amino-acid polypeptide reads, in one-letter code: MALVDPDIFNKDPREHYDLLQRLGGGTYGEVFKARDKVSKDLVALKMVKMEPDDDVATLQKEILMLKTCRHANIVAYHGSYLWLQKLWICMEFCGAGSLQDIYQVTGSLSELQISYVCREVLQGLAYLHSEKKIHRDIKGANILINDCGEVKLADFGISAQIGATLARRLSFIGTPYWMAPEVAAVALKGGYNELCDIWSLGITAIELAELQPPLFDVHPLRVLFLMTKSGYQPPRLKEKSRWSSSFHNFVKVTLTKNSKKRPSATKMLSHQLVSQPGLNRGLILDLLDKMKNPGKGLPVDIEDEEPEPPPAIPRRIRSTYRASSLGIPDADCCRRQMEFQRPRCVDCRPQAETVRLYPPAHFGSTSPRSQLSDSDDDYDDVDIPAPSENIPPPLPPKPKFRSPSDDGSGGIRDDGQLSPGVLVRCASGPPPRTPRPGPPPATCSPHLTARSDPSLWNPAAPEPGQPPLVPPRKEKMRGKMENEKRREKYPLLVKLFNGCPLQIHSTAAWTHPSTKDQNLLLGAEEGIFILNRNDQEATLEMIFPGRTTWLYCINNLLMSLSGKTPYLYSHSILGLLERKDGRTGSPIAHISPHRLLARKNMVSSKIQDTKGCRACCVAESASSGGPFLCGALETSVVLLQWYQPMNKFLLVRQVLFPLPTPLPVFTLLTTPGSELPAVCIGVSPGQAAKSVLFHTVRFGALSCWLDDSSTEHKGPVQVIQVKEDMVMVLMDGSLKLVTPEGAPAPGLRTPEIPMTEAVEAVAMVEDRLEAFWKHGVQVWAPGLKQPLQELRDPTLTFRLLCSPRPVVVETRPTDDPTAPSNLYIQE.

The Protein kinase domain occupies 17-274; it reads YDLLQRLGGG…ATKMLSHQLV (258 aa). ATP contacts are provided by residues 23–31 and Lys-46; that span reads LGGGTYGEV. Asp-137 acts as the Proton acceptor in catalysis. Thr-165 carries the post-translational modification Phosphothreonine; by autocatalysis. Ser-171 bears the Phosphoserine; by autocatalysis mark. Thr-175 carries the post-translational modification Phosphothreonine; by autocatalysis. The interval 296–315 is disordered; sequence KGLPVDIEDEEPEPPPAIPR. Phosphothreonine; by autocatalysis is present on Thr-354. Positions 359–485 are disordered; that stretch reads PPAHFGSTSP…KMRGKMENEK (127 aa). Ser-373, Ser-375, Ser-403, Ser-405, and Ser-419 each carry phosphoserine. A compositionally biased stretch (acidic residues) spans 374–383; it reads DSDDDYDDVD. Composition is skewed to pro residues over residues 429–443 and 461–471; these read GPPP…PPAT and APEPGQPPLVP. The segment covering 472–485 has biased composition (basic and acidic residues); the sequence is PRKEKMRGKMENEK. In terms of domain architecture, CNH spans 501-806; it reads PLQIHSTAAW…TFRLLCSPRP (306 aa). Ser-592 is subject to Phosphoserine.

The protein belongs to the protein kinase superfamily. STE Ser/Thr protein kinase family. STE20 subfamily. Interacts with MAP3K1. Interacts with FBXW8. Interacts with CLNK (via its SH2 domain). Mg(2+) serves as cofactor. Post-translationally, autophosphorylates: phosphorylation promotes ubiquitination by the Cul7-RING(FBXW8) ubiquitin-protein ligase complex, leading to its degradation by the proteasome. Tyrosine-phosphorylated after activation of hemopoietic cells. In terms of processing, ubiquitinated by the Cul7-RING(FBXW8) ubiquitin-protein ligase complex following autophosphorylation, leading to its degradation by the proteasome. As to expression, expressed in hemopoietic cells (at protein level). Ubiquitously expressed in all tissues examined at embryonic stage 16.5 dpc with high levels in lung, heart and fetal liver. In the neonate, expression is restricted to the tissues which undergo lineage decisions, lung, thymus, liver, kidney and brain. In the adult, expression is limited to hemopoietic organs, thymus, bone marrow, and spleen and to the testis.

It carries out the reaction L-seryl-[protein] + ATP = O-phospho-L-seryl-[protein] + ADP + H(+). The catalysed reaction is L-threonyl-[protein] + ATP = O-phospho-L-threonyl-[protein] + ADP + H(+). Its function is as follows. Serine/threonine-protein kinase, which plays a role in the response to environmental stress. Appears to act upstream of the JUN N-terminal pathway. Activator of the Hippo signaling pathway which plays a pivotal role in organ size control and tumor suppression by restricting proliferation and promoting apoptosis. MAP4Ks act in parallel to and are partially redundant with STK3/MST2 and STK4/MST2 in the phosphorylation and activation of LATS1/2, and establish MAP4Ks as components of the expanded Hippo pathway. May play a role in hematopoietic lineage decisions and growth regulation. Together with CLNK, it enhances CD3-triggered activation of T-cells and subsequent IL2 production. The protein is Mitogen-activated protein kinase kinase kinase kinase 1 (Map4k1) of Mus musculus (Mouse).